The following is a 504-amino-acid chain: ATP synthase subunit alpha 2 (504 aa).

An ATP-binding site is contributed by 169–176; it reads GDRQTGKT.

Belongs to the ATPase alpha/beta chains family. F-type ATPases have 2 components, CF(1) - the catalytic core - and CF(0) - the membrane proton channel. CF(1) has five subunits: alpha(3), beta(3), gamma(1), delta(1), epsilon(1). CF(0) has three main subunits: a(1), b(2) and c(9-12). The alpha and beta chains form an alternating ring which encloses part of the gamma chain. CF(1) is attached to CF(0) by a central stalk formed by the gamma and epsilon chains, while a peripheral stalk is formed by the delta and b chains.

The protein resides in the cell membrane. It carries out the reaction ATP + H2O + 4 H(+)(in) = ADP + phosphate + 5 H(+)(out). In terms of biological role, produces ATP from ADP in the presence of a proton gradient across the membrane. The alpha chain is a regulatory subunit. The chain is ATP synthase subunit alpha 2 from Listeria monocytogenes serotype 4b (strain F2365).